The primary structure comprises 283 residues: Elongation factor Ts (283 aa).

Residues 80–83 are involved in Mg(2+) ion dislocation from EF-Tu; that stretch reads TDFV.

It belongs to the EF-Ts family.

It localises to the cytoplasm. Associates with the EF-Tu.GDP complex and induces the exchange of GDP to GTP. It remains bound to the aminoacyl-tRNA.EF-Tu.GTP complex up to the GTP hydrolysis stage on the ribosome. This is Elongation factor Ts from Haemophilus influenzae (strain PittGG).